The following is a 78-amino-acid chain: Large ribosomal subunit protein bL28 (78 aa).

Belongs to the bacterial ribosomal protein bL28 family.

This Colwellia psychrerythraea (strain 34H / ATCC BAA-681) (Vibrio psychroerythus) protein is Large ribosomal subunit protein bL28.